The following is a 119-amino-acid chain: Large ribosomal subunit protein bL20 (119 aa).

It belongs to the bacterial ribosomal protein bL20 family.

In terms of biological role, binds directly to 23S ribosomal RNA and is necessary for the in vitro assembly process of the 50S ribosomal subunit. It is not involved in the protein synthesizing functions of that subunit. The chain is Large ribosomal subunit protein bL20 from Herminiimonas arsenicoxydans.